The sequence spans 445 residues: DDB1- and CUL4-associated factor 13 (445 aa).

WD repeat units follow at residues 64–104, 107–146, 152–191, 194–234, 236–276, 280–319, and 323–362; these read GHRD…CSRT, AHDG…YGEK, TILG…PMRS, WGVD…PLKK, ILEM…SPVK, DHVS…SREV, and KRMQ…KLGV. A required for nucleolar location region spans residues 353 to 441; the sequence is KANASEKLGV…IPSEKKKHVL (89 aa). Composition is skewed to basic residues over residues 413–426 and 436–445; these read ARRK…KHSK and KKKHVLAVVE. The tract at residues 413–445 is disordered; it reads ARRKKDVNRRKHSKPGSVPIPSEKKKHVLAVVE.

Belongs to the WD repeat DCAF13/WDSOF1 family. As to quaternary structure, part of the small subunit (SSU) processome, composed of more than 70 proteins and the RNA chaperone small nucleolar RNA (snoRNA) U3. Component of the DCX(DCAF13) E3 ubiquitin ligase complex, at least composed of CUL4 (CUL4A or CUL4B), DDB1, DCAF13 and RBX1.

It is found in the nucleus. Its subcellular location is the nucleolus. It functions in the pathway protein modification; protein ubiquitination. In terms of biological role, part of the small subunit (SSU) processome, first precursor of the small eukaryotic ribosomal subunit. During the assembly of the SSU processome in the nucleolus, many ribosome biogenesis factors, an RNA chaperone and ribosomal proteins associate with the nascent pre-rRNA and work in concert to generate RNA folding, modifications, rearrangements and cleavage as well as targeted degradation of pre-ribosomal RNA by the RNA exosome. Its function is as follows. Substrate-recognition component of a DCX (DDB1-CUL4-X-box) E3 ubiquitin-protein ligase complex. The polypeptide is DDB1- and CUL4-associated factor 13 (dcaf13) (Xenopus laevis (African clawed frog)).